The chain runs to 511 residues: Putative polyol transporter 1 (511 aa).

Helical transmembrane passes span 27-47 (FACA…IGVM), 63-83 (VQLE…SGAA), 94-114 (YTIV…GFAT), 124-144 (FVAG…TAEV), 151-171 (GFLT…GYVS), 186-206 (FMLG…LAMP), 284-304 (ILIA…DAVV), 324-344 (LATV…TCVV), 351-371 (ALLL…GTSL), 384-404 (WAIG…SIGA), 424-444 (GASL…MTFL), and 454-474 (GAFL…FTFL).

It belongs to the major facilitator superfamily. Sugar transporter (TC 2.A.1.1) family.

It is found in the membrane. Its function is as follows. Plasma membrane sugar-proton symporter. This chain is Putative polyol transporter 1 (PLT1), found in Arabidopsis thaliana (Mouse-ear cress).